The following is a 244-amino-acid chain: tRNA (guanine-N(1)-)-methyltransferase (244 aa).

S-adenosyl-L-methionine is bound by residues Gly113 and 133 to 138; that span reads IGDYVL.

Belongs to the RNA methyltransferase TrmD family. As to quaternary structure, homodimer.

Its subcellular location is the cytoplasm. It carries out the reaction guanosine(37) in tRNA + S-adenosyl-L-methionine = N(1)-methylguanosine(37) in tRNA + S-adenosyl-L-homocysteine + H(+). Its function is as follows. Specifically methylates guanosine-37 in various tRNAs. The chain is tRNA (guanine-N(1)-)-methyltransferase from Bacillus cereus (strain G9842).